Reading from the N-terminus, the 265-residue chain is Triosephosphate isomerase (265 aa).

Position 13–15 (asparagine 13–lysine 15) interacts with substrate. The active-site Electrophile is the histidine 106. Glutamate 179 serves as the catalytic Proton acceptor. Substrate contacts are provided by residues glycine 185, serine 223, and glycine 244–glycine 245.

It belongs to the triosephosphate isomerase family. In terms of assembly, homodimer.

Its subcellular location is the cytoplasm. It carries out the reaction D-glyceraldehyde 3-phosphate = dihydroxyacetone phosphate. It functions in the pathway carbohydrate biosynthesis; gluconeogenesis. It participates in carbohydrate degradation; glycolysis; D-glyceraldehyde 3-phosphate from glycerone phosphate: step 1/1. Involved in the gluconeogenesis. Catalyzes stereospecifically the conversion of dihydroxyacetone phosphate (DHAP) to D-glyceraldehyde-3-phosphate (G3P). This chain is Triosephosphate isomerase, found in Acinetobacter baylyi (strain ATCC 33305 / BD413 / ADP1).